The chain runs to 78 residues: Large ribosomal subunit protein uL24 (78 aa).

Residues 52-78 (PSEKTPNGGHVNKEMPIDISNVAKVEG) are disordered.

Belongs to the universal ribosomal protein uL24 family. As to quaternary structure, part of the 50S ribosomal subunit.

Its function is as follows. One of two assembly initiator proteins, it binds directly to the 5'-end of the 23S rRNA, where it nucleates assembly of the 50S subunit. Functionally, one of the proteins that surrounds the polypeptide exit tunnel on the outside of the subunit. This Campylobacter concisus (strain 13826) protein is Large ribosomal subunit protein uL24.